The sequence spans 639 residues: Probable methyltransferase PMT18 (639 aa).

The Cytoplasmic portion of the chain corresponds to 1–19 (MAKENSSHSLAEAKRKRLT). The chain crosses the membrane as a helical; Signal-anchor for type II membrane protein span at residues 20-42 (WILCVSGLCILSYVLGSWQTNTV). Residues 41 to 86 (TVPTSSSEAYSRMGCDETSTTTRAQTTQTQTNPSSDDTSSSLSSSE) are disordered. At 43–639 (PTSSSEAYSR…VKSYWTGPSS (597 aa)) the chain is on the lumenal side. The span at 58–85 (TSTTTRAQTTQTQTNPSSDDTSSSLSSS) shows a compositional bias: low complexity. Residues N104 and N427 are each glycosylated (N-linked (GlcNAc...) asparagine).

The protein belongs to the methyltransferase superfamily.

It localises to the endoplasmic reticulum membrane. This chain is Probable methyltransferase PMT18, found in Arabidopsis thaliana (Mouse-ear cress).